Reading from the N-terminus, the 313-residue chain is Ribosomal RNA small subunit methyltransferase H (313 aa).

S-adenosyl-L-methionine contacts are provided by residues Gly-37–His-39, Asp-57, Phe-83, Asp-104, and Gln-111.

Belongs to the methyltransferase superfamily. RsmH family.

It is found in the cytoplasm. The catalysed reaction is cytidine(1402) in 16S rRNA + S-adenosyl-L-methionine = N(4)-methylcytidine(1402) in 16S rRNA + S-adenosyl-L-homocysteine + H(+). Its function is as follows. Specifically methylates the N4 position of cytidine in position 1402 (C1402) of 16S rRNA. In Mycoplasmoides gallisepticum (strain R(low / passage 15 / clone 2)) (Mycoplasma gallisepticum), this protein is Ribosomal RNA small subunit methyltransferase H.